A 219-amino-acid polypeptide reads, in one-letter code: Charged multivesicular body protein 5 (219 aa).

Residues 22–153 (TNVDGRAESI…EIQEALSRSY (132 aa)) adopt a coiled-coil conformation.

It belongs to the SNF7 family. In terms of assembly, probable peripherally associated component of the endosomal sorting required for transport complex III (ESCRT-III).

It localises to the cytoplasm. It is found in the cytosol. The protein localises to the endosome membrane. In terms of biological role, probable peripherally associated component of the endosomal sorting required for transport complex III (ESCRT-III) which is involved in multivesicular bodies (MVBs) formation and sorting of endosomal cargo proteins into MVBs. MVBs contain intraluminal vesicles (ILVs) that are generated by invagination and scission from the limiting membrane of the endosome and mostly are delivered to lysosomes enabling degradation of membrane proteins, such as stimulated growth factor receptors, lysosomal enzymes and lipids. This chain is Charged multivesicular body protein 5 (chmp5), found in Xenopus laevis (African clawed frog).